The primary structure comprises 400 residues: CinA-like protein (400 aa).

It belongs to the CinA family.

The polypeptide is CinA-like protein (Escherichia coli O9:H4 (strain HS)).